Reading from the N-terminus, the 257-residue chain is Small ribosomal subunit protein uS2 (257 aa).

This sequence belongs to the universal ribosomal protein uS2 family.

This chain is Small ribosomal subunit protein uS2, found in Bartonella henselae (strain ATCC 49882 / DSM 28221 / CCUG 30454 / Houston 1) (Rochalimaea henselae).